Here is a 316-residue protein sequence, read N- to C-terminus: Pantothenate kinase (316 aa).

95–102 (GSVAVGKS) is a binding site for ATP.

It belongs to the prokaryotic pantothenate kinase family.

It localises to the cytoplasm. It carries out the reaction (R)-pantothenate + ATP = (R)-4'-phosphopantothenate + ADP + H(+). It functions in the pathway cofactor biosynthesis; coenzyme A biosynthesis; CoA from (R)-pantothenate: step 1/5. This Klebsiella pneumoniae subsp. pneumoniae (strain ATCC 700721 / MGH 78578) protein is Pantothenate kinase.